Consider the following 369-residue polypeptide: Nuclear pore complex-interacting protein family member A6 (369 aa).

Residues 151–170 (SMKEREHGEKERQVSEAEEN) form a disordered region.

The protein belongs to the NPIP family.

This chain is Nuclear pore complex-interacting protein family member A6, found in Homo sapiens (Human).